The following is a 78-amino-acid chain: MSGLGIMVLTLLLFMFMATSHQDAGEKQATQRDAINVRRRRSITRRGDEECNEHCEDRNKECCGRTNGHPRCANVCFG.

Residues 1–24 (MSGLGIMVLTLLLFMFMATSHQDA) form the signal peptide. A propeptide spanning residues 25-44 (GEKQATQRDAINVRRRRSIT) is cleaved from the precursor. Disulfide bonds link cysteine 51–cysteine 63, cysteine 55–cysteine 72, and cysteine 62–cysteine 76. The residue at position 77 (phenylalanine 77) is a Phenylalanine amide.

Belongs to the conotoxin O3 superfamily. Expressed by the venom duct.

The protein resides in the secreted. This chain is Conotoxin TsMSGL-13, found in Conus tessulatus (Tessellate cone).